The primary structure comprises 145 residues: 3-hydroxyacyl-[acyl-carrier-protein] dehydratase FabZ (145 aa).

H47 is an active-site residue.

The protein belongs to the thioester dehydratase family. FabZ subfamily.

Its subcellular location is the cytoplasm. The enzyme catalyses a (3R)-hydroxyacyl-[ACP] = a (2E)-enoyl-[ACP] + H2O. Functionally, involved in unsaturated fatty acids biosynthesis. Catalyzes the dehydration of short chain beta-hydroxyacyl-ACPs and long chain saturated and unsaturated beta-hydroxyacyl-ACPs. The sequence is that of 3-hydroxyacyl-[acyl-carrier-protein] dehydratase FabZ from Chromohalobacter salexigens (strain ATCC BAA-138 / DSM 3043 / CIP 106854 / NCIMB 13768 / 1H11).